The following is a 224-amino-acid chain: uncharacterized protein (224 aa).

Positions 57, 59, 61, 62, 138, 162, and 203 each coordinate Zn(2+).

It belongs to the metallo-beta-lactamase superfamily. Glyoxalase II family. The cofactor is Zn(2+).

This is an uncharacterized protein from Mycobacterium tuberculosis (strain CDC 1551 / Oshkosh).